Reading from the N-terminus, the 481-residue chain is Glutamyl-tRNA(Gln) amidotransferase subunit A (481 aa).

Residues Lys76 and Ser151 each act as charge relay system in the active site. The active-site Acyl-ester intermediate is the Ser175.

The protein belongs to the amidase family. GatA subfamily. As to quaternary structure, heterotrimer of A, B and C subunits.

It carries out the reaction L-glutamyl-tRNA(Gln) + L-glutamine + ATP + H2O = L-glutaminyl-tRNA(Gln) + L-glutamate + ADP + phosphate + H(+). In terms of biological role, allows the formation of correctly charged Gln-tRNA(Gln) through the transamidation of misacylated Glu-tRNA(Gln) in organisms which lack glutaminyl-tRNA synthetase. The reaction takes place in the presence of glutamine and ATP through an activated gamma-phospho-Glu-tRNA(Gln). The polypeptide is Glutamyl-tRNA(Gln) amidotransferase subunit A (Neisseria gonorrhoeae (strain ATCC 700825 / FA 1090)).